An 837-amino-acid polypeptide reads, in one-letter code: Protein TRANSPARENT TESTA 9 (837 aa).

Positions 42-192 (LRSIAEILTY…AVRALTLNVY (151 aa)) constitute an FPL domain. The tract at residues 366–386 (TEEANQQCSSTAAGMSDDGNS) is disordered. The segment covering 368-378 (EANQQCSSTAA) has biased composition (polar residues).

The protein belongs to the CLEC16A/gop-1 family.

The protein localises to the golgi apparatus membrane. Its function is as follows. Involved in membrane trafficking and vacuole development through membrane fusion at the vacuole. Required for membrane trafficking machinery and accumulation of flavonoids in the seed coat. This is Protein TRANSPARENT TESTA 9 from Arabidopsis thaliana (Mouse-ear cress).